Consider the following 175-residue polypeptide: Large ribosomal subunit protein uL10 (175 aa).

It belongs to the universal ribosomal protein uL10 family. In terms of assembly, part of the ribosomal stalk of the 50S ribosomal subunit. The N-terminus interacts with L11 and the large rRNA to form the base of the stalk. The C-terminus forms an elongated spine to which L12 dimers bind in a sequential fashion forming a multimeric L10(L12)X complex.

Functionally, forms part of the ribosomal stalk, playing a central role in the interaction of the ribosome with GTP-bound translation factors. This chain is Large ribosomal subunit protein uL10, found in Prochlorococcus marinus (strain MIT 9215).